A 146-amino-acid polypeptide reads, in one-letter code: Hemoglobin subunit beta (146 aa).

Position 1 is a blocked amino end (Thr) (T1). The region spanning 2 to 146 (HWTAEERHYI…VAHALTLQYH (145 aa)) is the Globin domain. Residues H63 and H92 each coordinate heme b.

It belongs to the globin family. In terms of assembly, heterotetramer of two alpha chains and two beta chains. In terms of tissue distribution, red blood cells.

Its function is as follows. Involved in oxygen transport from the lung to the various peripheral tissues. This is Hemoglobin subunit beta (HBB) from Caretta caretta (Loggerhead sea turtle).